A 403-amino-acid chain; its full sequence is Alkaline protease 1 (403 aa).

The N-terminal stretch at 1–21 (MQSIKRTLLLLGAILPAVLGA) is a signal peptide. A propeptide spanning residues 22–125 (PVQETRRAAE…QIYYLDGLTT (104 aa)) is cleaved from the precursor. An Inhibitor I9 domain is found at 36–120 (KYIVTFKPGI…YVEEDQIYYL (85 aa)). Residues 130 to 403 (PWGLGSISHK…PNLLAYNGNA (274 aa)) form the Peptidase S8 domain. Active-site charge relay system residues include Asp162 and His193. Asn253 carries N-linked (GlcNAc...) asparagine glycosylation. Ser349 serves as the catalytic Charge relay system.

The protein belongs to the peptidase S8 family.

The protein resides in the secreted. It catalyses the reaction Hydrolysis of proteins with broad specificity, and of Bz-Arg-OEt &gt; Ac-Tyr-OEt. Does not hydrolyze peptide amides.. Functionally, secreted alkaline protease that allows assimilation of proteinaceous substrates. In Aspergillus flavus (strain ATCC 200026 / FGSC A1120 / IAM 13836 / NRRL 3357 / JCM 12722 / SRRC 167), this protein is Alkaline protease 1 (alp1).